The primary structure comprises 438 residues: PHAF1 protein CG7083 (438 aa).

It belongs to the PHAF1 family.

The protein localises to the cytoplasm. It localises to the preautophagosomal structure. In terms of biological role, may play a regulatory role in autophagic activity. This chain is PHAF1 protein CG7083, found in Drosophila melanogaster (Fruit fly).